Here is a 109-residue protein sequence, read N- to C-terminus: UPF0122 protein Cbei_1174 (109 aa).

This sequence belongs to the UPF0122 family.

Might take part in the signal recognition particle (SRP) pathway. This is inferred from the conservation of its genetic proximity to ftsY/ffh. May be a regulatory protein. The polypeptide is UPF0122 protein Cbei_1174 (Clostridium beijerinckii (strain ATCC 51743 / NCIMB 8052) (Clostridium acetobutylicum)).